A 543-amino-acid chain; its full sequence is CTP synthase (543 aa).

Positions 1-265 (MTRYIFVTGG…DDIVVERFGL (265 aa)) are amidoligase domain. A CTP-binding site is contributed by serine 13. Position 13 (serine 13) interacts with UTP. ATP is bound by residues 14-19 (SLGKGI) and aspartate 71. Residues aspartate 71 and glutamate 139 each coordinate Mg(2+). CTP is bound by residues 146-148 (DIE), 186-191 (KTKPTQ), and lysine 222. UTP is bound by residues 186-191 (KTKPTQ) and lysine 222. The Glutamine amidotransferase type-1 domain occupies 290-541 (TIAMVGKYME…VNAALAQKAR (252 aa)). Glycine 351 lines the L-glutamine pocket. Cysteine 378 functions as the Nucleophile; for glutamine hydrolysis in the catalytic mechanism. L-glutamine-binding positions include 379-382 (LGMQ), glutamate 402, and arginine 469. Active-site residues include histidine 514 and glutamate 516.

This sequence belongs to the CTP synthase family. As to quaternary structure, homotetramer.

It catalyses the reaction UTP + L-glutamine + ATP + H2O = CTP + L-glutamate + ADP + phosphate + 2 H(+). It carries out the reaction L-glutamine + H2O = L-glutamate + NH4(+). The catalysed reaction is UTP + NH4(+) + ATP = CTP + ADP + phosphate + 2 H(+). Its pathway is pyrimidine metabolism; CTP biosynthesis via de novo pathway; CTP from UDP: step 2/2. With respect to regulation, allosterically activated by GTP, when glutamine is the substrate; GTP has no effect on the reaction when ammonia is the substrate. The allosteric effector GTP functions by stabilizing the protein conformation that binds the tetrahedral intermediate(s) formed during glutamine hydrolysis. Inhibited by the product CTP, via allosteric rather than competitive inhibition. In terms of biological role, catalyzes the ATP-dependent amination of UTP to CTP with either L-glutamine or ammonia as the source of nitrogen. Regulates intracellular CTP levels through interactions with the four ribonucleotide triphosphates. The sequence is that of CTP synthase from Azotobacter vinelandii (strain DJ / ATCC BAA-1303).